We begin with the raw amino-acid sequence, 466 residues long: Probable ribonuclease FAU-1 (466 aa).

Residues 90 to 152 (GAIYAGTVTD…TDGRPVLDTT (63 aa)) enclose the S1 motif domain.

It belongs to the FAU-1 family.

Functionally, probable RNase involved in rRNA stability through maturation and/or degradation of precursor rRNAs. Binds to RNA in loop regions with AU-rich sequences. The polypeptide is Probable ribonuclease FAU-1 (Haloarcula marismortui (strain ATCC 43049 / DSM 3752 / JCM 8966 / VKM B-1809) (Halobacterium marismortui)).